Here is a 199-residue protein sequence, read N- to C-terminus: Prolactin (199 aa).

Cysteines 4 and 11 form a disulfide. Phosphoserine occurs at positions 26, 34, and 90. 2 cysteine pairs are disulfide-bonded: cysteine 58–cysteine 174 and cysteine 191–cysteine 199.

Belongs to the somatotropin/prolactin family. As to quaternary structure, interacts with PRLR.

Its subcellular location is the secreted. Its function is as follows. Prolactin acts primarily on the mammary gland by promoting lactation. The sequence is that of Prolactin (PRL) from Loxodonta africana (African elephant).